A 177-amino-acid chain; its full sequence is Adenine phosphoribosyltransferase (177 aa).

Belongs to the purine/pyrimidine phosphoribosyltransferase family. As to quaternary structure, homodimer.

It localises to the cytoplasm. The enzyme catalyses AMP + diphosphate = 5-phospho-alpha-D-ribose 1-diphosphate + adenine. It functions in the pathway purine metabolism; AMP biosynthesis via salvage pathway; AMP from adenine: step 1/1. Its function is as follows. Catalyzes a salvage reaction resulting in the formation of AMP, that is energically less costly than de novo synthesis. This chain is Adenine phosphoribosyltransferase, found in Leptospira borgpetersenii serovar Hardjo-bovis (strain JB197).